The following is a 181-amino-acid chain: ATP-dependent protease subunit HslV (181 aa).

Threonine 9 is a catalytic residue. Na(+)-binding residues include glycine 164, cysteine 167, and threonine 170.

The protein belongs to the peptidase T1B family. HslV subfamily. In terms of assembly, a double ring-shaped homohexamer of HslV is capped on each side by a ring-shaped HslU homohexamer. The assembly of the HslU/HslV complex is dependent on binding of ATP.

The protein localises to the cytoplasm. The enzyme catalyses ATP-dependent cleavage of peptide bonds with broad specificity.. Its activity is regulated as follows. Allosterically activated by HslU binding. Functionally, protease subunit of a proteasome-like degradation complex believed to be a general protein degrading machinery. The polypeptide is ATP-dependent protease subunit HslV (Gemmatimonas aurantiaca (strain DSM 14586 / JCM 11422 / NBRC 100505 / T-27)).